Consider the following 402-residue polypeptide: Enoyl-[acyl-carrier-protein] reductase [NADH] (402 aa).

Residues 48–53 (GASSGY), 74–75 (FE), 111–112 (DA), and 140–141 (LA) each bind NAD(+). Tyrosine 226 provides a ligand contact to substrate. The active-site Proton donor is tyrosine 236. NAD(+) is bound by residues lysine 245 and 274-276 (VVT).

This sequence belongs to the TER reductase family. As to quaternary structure, monomer.

The enzyme catalyses a 2,3-saturated acyl-[ACP] + NAD(+) = a (2E)-enoyl-[ACP] + NADH + H(+). The protein operates within lipid metabolism; fatty acid biosynthesis. In terms of biological role, involved in the final reduction of the elongation cycle of fatty acid synthesis (FAS II). Catalyzes the reduction of a carbon-carbon double bond in an enoyl moiety that is covalently linked to an acyl carrier protein (ACP). The sequence is that of Enoyl-[acyl-carrier-protein] reductase [NADH] from Xanthomonas axonopodis pv. citri (strain 306).